A 369-amino-acid chain; its full sequence is Protein-glutamate methylesterase/protein-glutamine glutaminase 1 (369 aa).

Residues 3–120 form the Response regulatory domain; the sequence is KVVVVDDSAF…SLDIVKIEKD (118 aa). Residue Asp-54 is modified to 4-aspartylphosphate. A compositionally biased stretch (low complexity) spans 136 to 168; sequence RSFRPAPAVRPAAPAALRATPRPSAAPSSAASS. Residues 136 to 174 form a disordered region; sequence RSFRPAPAVRPAAPAALRATPRPSAAPSSAASSTGTLQV. The region spanning 177–369 is the CheB-type methylesterase domain; the sequence is GKPVRDVVAI…AQAIMNAVYK (193 aa). Active-site residues include Ser-189, His-216, and Asp-312.

Belongs to the CheB family. In terms of processing, phosphorylated by CheA. Phosphorylation of the N-terminal regulatory domain activates the methylesterase activity.

It is found in the cytoplasm. The enzyme catalyses [protein]-L-glutamate 5-O-methyl ester + H2O = L-glutamyl-[protein] + methanol + H(+). The catalysed reaction is L-glutaminyl-[protein] + H2O = L-glutamyl-[protein] + NH4(+). Functionally, involved in chemotaxis. Part of a chemotaxis signal transduction system that modulates chemotaxis in response to various stimuli. Catalyzes the demethylation of specific methylglutamate residues introduced into the chemoreceptors (methyl-accepting chemotaxis proteins or MCP) by CheR. Also mediates the irreversible deamidation of specific glutamine residues to glutamic acid. This is Protein-glutamate methylesterase/protein-glutamine glutaminase 1 from Oleidesulfovibrio alaskensis (strain ATCC BAA-1058 / DSM 17464 / G20) (Desulfovibrio alaskensis).